We begin with the raw amino-acid sequence, 350 residues long: Heat-inducible transcription repressor HrcA (350 aa).

The protein belongs to the HrcA family.

Functionally, negative regulator of class I heat shock genes (grpE-dnaK-dnaJ and groELS operons). Prevents heat-shock induction of these operons. The chain is Heat-inducible transcription repressor HrcA from Ligilactobacillus salivarius (strain UCC118) (Lactobacillus salivarius).